The primary structure comprises 347 residues: NADH-ubiquinone oxidoreductase chain 2 (347 aa).

A run of 10 helical transmembrane segments spans residues 13–33 (IILGTSIVITSSHWLTVWIGF), 59–79 (YFLIQATASMLLMLAVTINLL), 84–104 (WAVSNMIDPLALTIMTLALAM), 111–131 (FHFWVPEVTQGVPLLSGLILL), 149–169 (IDPTLILTMSILSVLVGGWGG), 178–198 (IMAYSSISHMGWMTAILIYNP), 201–221 (TILNLLLYIMMTSTTFILLII), 240–260 (IAIIILTTMLSLGGLPPLTGF), 276–296 (IALSLFMAMAALLNLYFYTRL), and 326–346 (LSPLIIISTMILPLTPTMSAL).

This sequence belongs to the complex I subunit 2 family. As to quaternary structure, core subunit of respiratory chain NADH dehydrogenase (Complex I) which is composed of 45 different subunits. Interacts with TMEM242.

The protein localises to the mitochondrion inner membrane. The catalysed reaction is a ubiquinone + NADH + 5 H(+)(in) = a ubiquinol + NAD(+) + 4 H(+)(out). Functionally, core subunit of the mitochondrial membrane respiratory chain NADH dehydrogenase (Complex I) that is believed to belong to the minimal assembly required for catalysis. Complex I functions in the transfer of electrons from NADH to the respiratory chain. The immediate electron acceptor for the enzyme is believed to be ubiquinone. The protein is NADH-ubiquinone oxidoreductase chain 2 of Chrotopterus auritus (Peters's woolly false vampire bat).